The following is a 426-amino-acid chain: Branched-chain amino acid permease BrnQ (426 aa).

Helical transmembrane passes span 11-31 (LMLFSMFFGAGNLIFPPMLGL), 41-61 (ILGFLATSVLLPVLAIIAVVL), 76-96 (IFGLVFPIAAYLSIGAFYALP), 111-131 (NALYSGLFNFVFFAVALALSW), 140-160 (LGKWLTPALLTLIVVLVVLSV), 186-206 (GYMTMDAIAALAFGIVVISAF), 219-239 (VVSAFIAGILLALVYLGLGSI), 268-288 (IMFVAILILACMTTAVGLISA), 296-316 (LLPGVKYHVWATVFALISFGV), 324-344 (VLAVAAPVISFIYPSAITLVF), 358-378 (TYLFGIWTAVVWALFMSIPAL), and 390-410 (MSLGWVVPVLVASAIGLAIDW).

This sequence belongs to the branched chain amino acid transporter family.

Its subcellular location is the cell membrane. Branched chain amino acid transport system, which transports isoleucine. The protein is Branched-chain amino acid permease BrnQ of Corynebacterium glutamicum (strain ATCC 13032 / DSM 20300 / JCM 1318 / BCRC 11384 / CCUG 27702 / LMG 3730 / NBRC 12168 / NCIMB 10025 / NRRL B-2784 / 534).